Consider the following 61-residue polypeptide: Protein SspF (61 aa).

The protein belongs to the alpha/beta-type SASP family.

May play some important role in either sporulation or the dormant spore. The sequence is that of Protein SspF (sspF) from Bacillus subtilis (strain 168).